We begin with the raw amino-acid sequence, 503 residues long: Cytochrome P450 71B6 (503 aa).

Residues 10-30 traverse the membrane as a helical segment; it reads TELLPWLLLLLIPPLLIFFLL. C446 contributes to the heme binding site.

The protein belongs to the cytochrome P450 family. Heme is required as a cofactor.

The protein resides in the membrane. The protein is Cytochrome P450 71B6 (CYP71B6) of Arabidopsis thaliana (Mouse-ear cress).